The primary structure comprises 377 residues: Queuine tRNA-ribosyltransferase (377 aa).

Residue Asp-89 is the Proton acceptor of the active site. Substrate-binding positions include 89 to 93 (DSGGF), Asp-143, Gln-187, and Gly-214. The segment at 245-251 (GVGKPED) is RNA binding. Asp-264 functions as the Nucleophile in the catalytic mechanism. Positions 269–273 (TRNAR) are RNA binding; important for wobble base 34 recognition. Cys-302, Cys-304, Cys-307, and His-333 together coordinate Zn(2+).

It belongs to the queuine tRNA-ribosyltransferase family. In terms of assembly, homodimer. Within each dimer, one monomer is responsible for RNA recognition and catalysis, while the other monomer binds to the replacement base PreQ1. Requires Zn(2+) as cofactor.

The enzyme catalyses 7-aminomethyl-7-carbaguanine + guanosine(34) in tRNA = 7-aminomethyl-7-carbaguanosine(34) in tRNA + guanine. It functions in the pathway tRNA modification; tRNA-queuosine biosynthesis. Functionally, catalyzes the base-exchange of a guanine (G) residue with the queuine precursor 7-aminomethyl-7-deazaguanine (PreQ1) at position 34 (anticodon wobble position) in tRNAs with GU(N) anticodons (tRNA-Asp, -Asn, -His and -Tyr). Catalysis occurs through a double-displacement mechanism. The nucleophile active site attacks the C1' of nucleotide 34 to detach the guanine base from the RNA, forming a covalent enzyme-RNA intermediate. The proton acceptor active site deprotonates the incoming PreQ1, allowing a nucleophilic attack on the C1' of the ribose to form the product. After dissociation, two additional enzymatic reactions on the tRNA convert PreQ1 to queuine (Q), resulting in the hypermodified nucleoside queuosine (7-(((4,5-cis-dihydroxy-2-cyclopenten-1-yl)amino)methyl)-7-deazaguanosine). The sequence is that of Queuine tRNA-ribosyltransferase from Shewanella denitrificans (strain OS217 / ATCC BAA-1090 / DSM 15013).